Consider the following 460-residue polypeptide: ATP synthase subunit beta (460 aa).

An ATP-binding site is contributed by 150-157 (GGAGVGKT).

This sequence belongs to the ATPase alpha/beta chains family. As to quaternary structure, F-type ATPases have 2 components, CF(1) - the catalytic core - and CF(0) - the membrane proton channel. CF(1) has five subunits: alpha(3), beta(3), gamma(1), delta(1), epsilon(1). CF(0) has three main subunits: a(1), b(2) and c(9-12). The alpha and beta chains form an alternating ring which encloses part of the gamma chain. CF(1) is attached to CF(0) by a central stalk formed by the gamma and epsilon chains, while a peripheral stalk is formed by the delta and b chains.

The protein localises to the cell inner membrane. The enzyme catalyses ATP + H2O + 4 H(+)(in) = ADP + phosphate + 5 H(+)(out). Functionally, produces ATP from ADP in the presence of a proton gradient across the membrane. The catalytic sites are hosted primarily by the beta subunits. This chain is ATP synthase subunit beta, found in Escherichia coli (strain SMS-3-5 / SECEC).